Consider the following 196-residue polypeptide: Proteasome subunit beta 2 (196 aa).

Positions 1–6 (MEELPS) are cleaved as a propeptide — removed in mature form; by autocatalysis. T7 acts as the Nucleophile in catalysis.

Belongs to the peptidase T1B family. The 20S proteasome core is composed of 14 alpha and 14 beta subunits that assemble into four stacked heptameric rings, resulting in a barrel-shaped structure. The two inner rings, each composed of seven catalytic beta subunits, are sandwiched by two outer rings, each composed of seven alpha subunits. The catalytic chamber with the active sites is on the inside of the barrel. Has a gated structure, the ends of the cylinder being occluded by the N-termini of the alpha-subunits. Is capped at one or both ends by the proteasome regulatory ATPase, PAN.

The protein resides in the cytoplasm. It carries out the reaction Cleavage of peptide bonds with very broad specificity.. Its activity is regulated as follows. The formation of the proteasomal ATPase PAN-20S proteasome complex, via the docking of the C-termini of PAN into the intersubunit pockets in the alpha-rings, triggers opening of the gate for substrate entry. Interconversion between the open-gate and close-gate conformations leads to a dynamic regulation of the 20S proteasome proteolysis activity. Functionally, component of the proteasome core, a large protease complex with broad specificity involved in protein degradation. This is Proteasome subunit beta 2 from Metallosphaera sedula (strain ATCC 51363 / DSM 5348 / JCM 9185 / NBRC 15509 / TH2).